The sequence spans 353 residues: Protein RecA (353 aa).

Residue 67–74 (GPESSGKT) participates in ATP binding.

It belongs to the RecA family.

Its subcellular location is the cytoplasm. Functionally, can catalyze the hydrolysis of ATP in the presence of single-stranded DNA, the ATP-dependent uptake of single-stranded DNA by duplex DNA, and the ATP-dependent hybridization of homologous single-stranded DNAs. It interacts with LexA causing its activation and leading to its autocatalytic cleavage. The chain is Protein RecA from Shewanella sediminis (strain HAW-EB3).